We begin with the raw amino-acid sequence, 215 residues long: Glutathione S-transferase F9 (215 aa).

The region spanning 2-81 (VLKVYGPHFA…YVAEKYRSQG (80 aa)) is the GST N-terminal domain. 11–12 (AS) provides a ligand contact to glutathione. Ser12 is subject to Phosphoserine. At Met35 the chain carries Methionine sulfoxide. Residues 39 to 40 (HK), 52 to 53 (TV), and 65 to 66 (ES) contribute to the glutathione site. A GST C-terminal domain is found at 88 to 215 (TVEDRGQVEQ…ETVAKYSFPA (128 aa)). A methionine sulfoxide mark is found at Met118, Met123, and Met184.

This sequence belongs to the GST superfamily. Phi family. Oxidated at Met-35, Met-118, Met-123 and Met-184 in oxidative stress conditions (e.g. hydrogen peroxide H(2)O(2)).

It localises to the cytoplasm. The protein resides in the cytosol. It catalyses the reaction RX + glutathione = an S-substituted glutathione + a halide anion + H(+). Redox-regulated enzyme; in oxidative stress conditions methionine oxidation ensure a thermodynamic and structural compensatory mechanism to guarantee H(2)O(2) peroxidase activity despite transferase activity inhibition. Its function is as follows. In vitro, possesses glutathione S-transferase activity toward 1-chloro-2,4-dinitrobenzene (CDNB) and benzyl isothiocyanate (BITC), and glutathione peroxidase activity toward cumene hydroperoxide and linoleic acid-13-hydroperoxide. May be involved in the conjugation of reduced glutathione to a wide number of exogenous and endogenous hydrophobic electrophiles and have a detoxification role against certain herbicides. This Arabidopsis thaliana (Mouse-ear cress) protein is Glutathione S-transferase F9.